Here is a 223-residue protein sequence, read N- to C-terminus: Ribosomal RNA small subunit methyltransferase Nep1 (223 aa).

Residues Gly-181, Gly-186, and 199–204 contribute to the S-adenosyl-L-methionine site; that span reads LYREPL.

The protein belongs to the class IV-like SAM-binding methyltransferase superfamily. RNA methyltransferase NEP1 family. Homodimer.

It catalyses the reaction a pseudouridine in rRNA + S-adenosyl-L-methionine = an N(1)-methylpseudouridine in rRNA + S-adenosyl-L-homocysteine + H(+). Functionally, methyltransferase involved in ribosomal biogenesis. Specifically catalyzes the N1-methylation of the pseudouridine corresponding to position 914 in M.jannaschii 16S rRNA. The sequence is that of Ribosomal RNA small subunit methyltransferase Nep1 from Pyrococcus furiosus (strain ATCC 43587 / DSM 3638 / JCM 8422 / Vc1).